A 72-amino-acid chain; its full sequence is Translation initiation factor IF-1 (72 aa).

The S1-like domain maps to 1-72; sequence MSDKSIKMQA…SNGRITYRHK (72 aa).

It belongs to the IF-1 family. As to quaternary structure, component of the 30S ribosomal translation pre-initiation complex which assembles on the 30S ribosome in the order IF-2 and IF-3, IF-1 and N-formylmethionyl-tRNA(fMet); mRNA recruitment can occur at any time during PIC assembly.

Its subcellular location is the cytoplasm. Functionally, one of the essential components for the initiation of protein synthesis. Stabilizes the binding of IF-2 and IF-3 on the 30S subunit to which N-formylmethionyl-tRNA(fMet) subsequently binds. Helps modulate mRNA selection, yielding the 30S pre-initiation complex (PIC). Upon addition of the 50S ribosomal subunit IF-1, IF-2 and IF-3 are released leaving the mature 70S translation initiation complex. The chain is Translation initiation factor IF-1 from Mycoplasmopsis pulmonis (strain UAB CTIP) (Mycoplasma pulmonis).